A 2235-amino-acid chain; its full sequence is Mediator of RNA polymerase II transcription subunit 12 (2235 aa).

Positions 16-35 (SAIGGASARDSGRADSSSIG) are enriched in low complexity. 6 disordered regions span residues 16–80 (SAIG…EENL), 268–293 (FPAQ…SPAS), 835–858 (SVKR…GCED), 1900–1959 (SSVT…SPAA), 2134–2160 (GSTA…AQGK), and 2183–2202 (WTLL…ASNS). The span at 280–293 (MLYTGSMQKNSPAS) shows a compositional bias: polar residues. Over residues 1900-1916 (SSVTNRSTTSNKQMGTA) the composition is skewed to polar residues. Over residues 1917-1927 (SSGSEISSNKG) the composition is skewed to low complexity. Residues 2134 to 2155 (GSTAAAGTNQRNSPAISKSGTA) are compositionally biased toward polar residues. The span at 2191–2202 (SSGLSSSNASNS) shows a compositional bias: low complexity.

It belongs to the Mediator complex subunit 12 family. Component of the Mediator complex. As to expression, ubiquitous. Higher expression in vascular tissue, shoot apex and developing floral organs.

The protein localises to the nucleus. In terms of biological role, component of the Mediator complex, a coactivator involved in the regulated transcription of nearly all RNA polymerase II-dependent genes. Mediator functions as a bridge to convey information from gene-specific regulatory proteins to the basal RNA polymerase II transcription machinery. The Mediator complex, having a compact conformation in its free form, is recruited to promoters by direct interactions with regulatory proteins and serves for the assembly of a functional preinitiation complex with RNA polymerase II and the general transcription factors. Flowering regulator which suppresses FLC expression, promotes FT and TSF expression and up-regulates SOC1 and FUL mainly in an FT-dependent manner under long-day conditions. Involved in diverse developmental aspects through gene regulation and modulation of the auxin response. Acts closely together with MAB13. Involved in the regulation of embryo patterning and cotyledon organogenesis by transiently repressing a transcriptional program that interferes with this process. The sequence is that of Mediator of RNA polymerase II transcription subunit 12 (MED12) from Arabidopsis thaliana (Mouse-ear cress).